The following is a 344-amino-acid chain: N-acetyl-gamma-glutamyl-phosphate reductase (344 aa).

C149 is a catalytic residue.

Belongs to the NAGSA dehydrogenase family. Type 1 subfamily.

The protein localises to the cytoplasm. It carries out the reaction N-acetyl-L-glutamate 5-semialdehyde + phosphate + NADP(+) = N-acetyl-L-glutamyl 5-phosphate + NADPH + H(+). Its pathway is amino-acid biosynthesis; L-arginine biosynthesis; N(2)-acetyl-L-ornithine from L-glutamate: step 3/4. In terms of biological role, catalyzes the NADPH-dependent reduction of N-acetyl-5-glutamyl phosphate to yield N-acetyl-L-glutamate 5-semialdehyde. This chain is N-acetyl-gamma-glutamyl-phosphate reductase, found in Halorhodospira halophila (strain DSM 244 / SL1) (Ectothiorhodospira halophila (strain DSM 244 / SL1)).